A 435-amino-acid chain; its full sequence is MKQLHKQMSSKRDEETIPMSQSSPYSPKTLKHPRSLPRSLHYLFREQRLLFILVGILIGSTFFILQPSLSRLGAAESTSLITRSVSYAVTDSPPSRSTFNSGGGGGRTGRVPVGIGRKRLRIVVTGGAGFVGSHLVDKLIGRGDEVIVIDNFFTGRKENLVHLFSNPRFELIRHDVVEPILLEVDQIYHLACPASPVHYKYNPVKTIKTNVMGTLNMLGLAKRVGARFLLTSTSEVYGDPLEHPQKETYWGNVNPIGERSCYDEGKRTAETLAMDYHRGAGVEVRIARIFNTYGPRMCLDDGRVVSNFVAQTIRKHPMTVYGDGKQTRSFQYVSDLVEGLVALMENDHVGPFNLGNPGEFTMLELAEVVKEVIDPSATIEFKPNTADDPHKRKPDISKAKEQLNWEPKISLREGLPRMVSDFRNRILNEDEGKGL.

Residues M1 to P33 form a disordered region. Topologically, residues M1–R48 are cytoplasmic. The helical; Signal-anchor for type II membrane protein transmembrane segment at L49–L69 threads the bilayer. Topologically, residues S70 to L435 are lumenal. Residues D91–N100 show a composition bias toward polar residues. The interval D91–R110 is disordered. NAD(+) contacts are provided by G129, F130, V131, D150, N151, F153, T154, G155, D175, and V176. UDP-alpha-D-glucuronate is bound at residue I180. L190 serves as a coordination point for NAD(+). Residue K208 coordinates UDP-alpha-D-glucuronate. T209 lines the NAD(+) pocket. UDP-alpha-D-glucuronate is bound by residues N216, G219, K222, and R223. Residues Y262 and K266 each coordinate NAD(+). Y262 functions as the Proton acceptor in the catalytic mechanism. Y276 serves as a coordination point for UDP-alpha-D-glucuronate. Residues T292 and R303 each contribute to the NAD(+) site. Positions E380 to E401 are disordered. Residues T385 to E401 are compositionally biased toward basic and acidic residues.

Belongs to the NAD(P)-dependent epimerase/dehydratase family. UDP-glucuronic acid decarboxylase subfamily. The cofactor is NAD(+). As to expression, ubiquitous.

Its subcellular location is the golgi apparatus. It localises to the golgi stack membrane. It carries out the reaction UDP-alpha-D-glucuronate + H(+) = UDP-alpha-D-xylose + CO2. The protein operates within nucleotide-sugar biosynthesis; UDP-alpha-D-xylose biosynthesis; UDP-alpha-D-xylose from UDP-alpha-D-glucuronate: step 1/1. In terms of biological role, catalyzes the NAD-dependent decarboxylation of UDP-glucuronic acid to UDP-xylose. Necessary for the biosynthesis of the core tetrasaccharide in glycosaminoglycan biosynthesis. This is UDP-glucuronic acid decarboxylase 1 from Arabidopsis thaliana (Mouse-ear cress).